The primary structure comprises 408 residues: Argininosuccinate synthase (408 aa).

ATP is bound by residues 9–17 and Ala36; that span reads AYSGGLDTS. Residues Tyr87 and Ser92 each contribute to the L-citrulline site. An ATP-binding site is contributed by Gly117. Residues Thr119, Asn123, and Asp124 each coordinate L-aspartate. An L-citrulline-binding site is contributed by Asn123. The L-citrulline site is built by Arg127, Ser176, Ser185, Glu261, and Tyr273.

Belongs to the argininosuccinate synthase family. Type 1 subfamily. Homotetramer.

The protein resides in the cytoplasm. The enzyme catalyses L-citrulline + L-aspartate + ATP = 2-(N(omega)-L-arginino)succinate + AMP + diphosphate + H(+). It functions in the pathway amino-acid biosynthesis; L-arginine biosynthesis; L-arginine from L-ornithine and carbamoyl phosphate: step 2/3. In Deinococcus deserti (strain DSM 17065 / CIP 109153 / LMG 22923 / VCD115), this protein is Argininosuccinate synthase.